Consider the following 703-residue polypeptide: MRRRSTEGTVMTDGSKPTFEIGIAMSGAISAGAYSAGVFDFLIQALDAWEKAKAEGAPDLPEYDVRLKALSGASAGAITAAIGVIAAGGREAPATFPSPAPGSQNIRFTLGRLYRSWVTSPTLVSPDGSPDLLSLEDLAGGRPVISVLNANVLTAIGAEALEATGTLSPRAYVASSLHLYMMLSNLRGVPYAIHFNGGQYNMMTHADRVHYVVEGIGTWKPTPSPFADTDSGTSIAATSLFGAAGASTRPPEWLAFANAALASGAFPIGLSPRVIATATSQYAKAKFPISEDQSELRPIPTWPDAWHVSASQDYPFSFVSVDGGLINNDPFEFVRFTLMKDPPRPNERNAEKADRAVIMIAPFPEGPPFLGDGEPPLGVLSIARRVVTALRQQVRFKPDQLLAVAAEGTHSRFMISPHRVPPSTPGGEEREETFSIASGLLGGFGGFVLEAFRDHDYQLGRRNCQYFLMRHLTIDKNHQTLHWPEGAAERRNAVISKTLSDGSMHDYVPIIPLVGDALPEVPYPRWARIDENAFALLVKRIEARLVAVARRLVSTETTSARMKLGLNFLLLVGRNRIVDYIRLTLLQELVMRDQIEGWPLPAADLRPDFVRAVLAALLDPAFDLRTEAGIARTTKLDTSLVREILSTLAGAAGANCQVWLAPWTRTDEPSLYTLVSRRPSFLATLLQGRSPARLFAKPVVDRK.

The next 4 helical transmembrane spans lie at 23–43 (IAMSGAISAGAYSAGVFDFLI), 69–89 (ALSGASAGAITAAIGVIAAGG), 143–163 (PVISVLNANVLTAIGAEALEA), and 250–270 (PPEWLAFANAALASGAFPIGL). The region spanning 23-335 (IAMSGAISAG…INNDPFEFVR (313 aa)) is the PNPLA domain. The GXSXG signature appears at 72–76 (GASAG). Serine 74 serves as the catalytic Nucleophile. The Proton acceptor role is filled by aspartate 322. The short motif at 322-324 (DGG) is the DGA/G element. Transmembrane regions (helical) follow at residues 357-377 (VIMIAPFPEGPPFLGDGEPPL), 432-452 (ETFSIASGLLGGFGGFVLEAF), and 644-664 (ILSTLAGAAGANCQVWLAPWT).

Its subcellular location is the cell membrane. This is an uncharacterized protein from Sinorhizobium fredii (strain NBRC 101917 / NGR234).